The primary structure comprises 802 residues: Mitochondrial inner membrane m-AAA protease component AFG3L2 (802 aa).

The transit peptide at 1-38 directs the protein to the mitochondrion; sequence MAHRCLLLWSRGGCRRGLPPLLVPRGCLGPDRRPCLRT. Positions 39–66 are cleaved as a propeptide — removed in mature form; that stretch reads LYQYATVQTASSRRSLLRDVIAAYQRFC. The disordered stretch occupies residues 76 to 124; the sequence is YFPNGKNGKKASEPKEAVGEKKEPQPSGPQPSGGAGGGGGKRRGKKEDS. Residues 85–99 are compositionally biased toward basic and acidic residues; the sequence is KASEPKEAVGEKKEP. An N6-succinyllysine modification is found at lysine 116. The next 2 membrane-spanning stretches (helical) occupy residues 142–162 and 250–270; these read FRMY…YFVF and GSFL…LYTI. The ATP site is built by valine 309, alanine 310, threonine 351, glycine 352, lysine 353, threonine 354, leucine 355, and histidine 489. Histidine 573 contributes to the Zn(2+) binding site. The active site involves glutamate 574. Residues histidine 577 and aspartate 648 each coordinate Zn(2+). Positions 759 to 802 are disordered; sequence VEGTGSLDEDTSLPEGLQDWNKEREKEEKKEKEKEEPLNEKVVS. Residues 778–802 show a composition bias toward basic and acidic residues; sequence WNKEREKEEKKEKEKEEPLNEKVVS.

In the N-terminal section; belongs to the AAA ATPase family. The protein in the C-terminal section; belongs to the peptidase M41 family. In terms of assembly, homohexamer. Forms heterohexamers with SPG7 and AFG3L1. The m-AAA protease is either composed of homohexamers of AFG3L2 or heterohexamers of AFG3L1, AFG3L2 and/or SPG7. Interacts with MAIP1. Interacts with DNAJC19. Interacts with PHB2. The cofactor is Zn(2+). Upon import into the mitochondrion, the N-terminal transit peptide is cleaved to generate an intermediate form which undergoes autocatalytic proteolytic processing to generate the proteolytically active mature form. As to expression, highly expressed in the cerebellar Purkinje cells.

The protein resides in the mitochondrion inner membrane. The enzyme catalyses ATP + H2O = ADP + phosphate + H(+). Functionally, catalytic component of the m-AAA protease, a protease that plays a key role in proteostasis of inner mitochondrial membrane proteins, and which is essential for axonal and neuron development. AFG3L2 possesses both ATPase and protease activities: the ATPase activity is required to unfold substrates, threading them into the internal proteolytic cavity for hydrolysis into small peptide fragments. The m-AAA protease carries out protein quality control in the inner membrane of the mitochondria by mediating degradation of mistranslated or misfolded polypeptides. The m-AAA protease complex also promotes the processing and maturation of mitochondrial proteins, such as MRPL32/bL32m, PINK1 and SP7. Mediates protein maturation of the mitochondrial ribosomal subunit MRPL32/bL32m by catalyzing the cleavage of the presequence of MRPL32/bL32m prior to assembly into the mitochondrial ribosome. Required for SPG7 maturation into its active mature form after SPG7 cleavage by mitochondrial-processing peptidase (MPP). Required for the maturation of PINK1 into its 52kDa mature form after its cleavage by mitochondrial-processing peptidase (MPP). Acts as a regulator of calcium in neurons by mediating degradation of SMDT1/EMRE before its assembly with the uniporter complex, limiting the availability of SMDT1/EMRE for MCU assembly and promoting efficient assembly of gatekeeper subunits with MCU. Promotes the proteolytic degradation of GHITM upon hyperpolarization of mitochondria: progressive GHITM degradation leads to respiratory complex I degradation and broad reshaping of the mitochondrial proteome by AFG3L2. Also acts as a regulator of mitochondrial glutathione homeostasis by mediating cleavage and degradation of SLC25A39. SLC25A39 cleavage is prevented when SLC25A39 binds iron-sulfur. Involved in the regulation of OMA1-dependent processing of OPA1. May act by mediating processing of OMA1 precursor, participating in OMA1 maturation. The sequence is that of Mitochondrial inner membrane m-AAA protease component AFG3L2 from Mus musculus (Mouse).